Here is a 350-residue protein sequence, read N- to C-terminus: Cilia- and flagella-associated protein 36 (350 aa).

The stretch at 142–167 (SELEQQEMKILQEVLRRSKEEYDLQM) forms a coiled coil. Disordered stretches follow at residues 171 to 233 (GLGS…ATTA) and 301 to 337 (RQTG…QKRK). Positions 177-220 (LASTSSSVSETPQNPEQRLSNGVSDPLTLTQPDSEMEESSTATQ) are enriched in polar residues. The stretch at 280–350 (VALQQRSEYL…EKLKEEVIKK (71 aa)) forms a coiled coil.

The protein belongs to the CFAP36 family.

Its subcellular location is the nucleus. The protein resides in the cytoplasm. It is found in the cell projection. It localises to the cilium. The protein localises to the flagellum. This chain is Cilia- and flagella-associated protein 36, found in Danio rerio (Zebrafish).